Consider the following 197-residue polypeptide: Cerebellin-3 (197 aa).

A signal peptide spans 1–24; the sequence is MGTEWHKPKLSLALVLLTLEAGWA. A C1q domain is found at 59-197; it reads APPGRVAFAA…SFSGFLIFPL (139 aa). The segment at 64 to 197 is necessary for interaction with CBLN3, and homotrimerization; the sequence is VAFAAVRSHH…SFSGFLIFPL (134 aa). N-linked (GlcNAc...) asparagine glycosylation is present at Asn-82.

In terms of assembly, heterohexamer; disulfide-linked heterotrimers. Interacts with CBLN1. May also form oligomers with CBLN2 and CBLN4. As to expression, expressed in brain, restricted to the cerebellar cortex. Within the cerebellum, expressed in granule layers (at protein level). Also detected in postsynaptic Purkinje cell spines (at protein level).

The protein resides in the endoplasmic reticulum. It is found in the golgi apparatus. It localises to the cis-Golgi network. The protein localises to the secreted. Its subcellular location is the synapse. Functionally, may be involved in synaptic functions in the CNS. This chain is Cerebellin-3 (Cbln3), found in Mus musculus (Mouse).